The following is a 730-amino-acid chain: Actin filament-associated protein 1 (730 aa).

N-acetylmethionine is present on methionine 1. The tract at residues 47 to 91 (KDHAQKQETANSLPAPPQMPLPEIPQPWLPPDSGPPPLPTSSLPE) is disordered. Over residues 60-85 (PAPPQMPLPEIPQPWLPPDSGPPPLP) the composition is skewed to pro residues. Residues 71–74 (PQPW) carry the SH3-binding motif. Positions 94-97 (YEEA) match the SH2-binding 1 motif. A disordered region spans residues 119–140 (SSSYESYDEEEEDGKGKKTRHQ). In terms of domain architecture, PH 1 spans 153 to 249 (DAKICAFLLR…WLKVIKEAYS (97 aa)). The disordered stretch occupies residues 252-292 (SGPVDSECPPPPSSPVHKAELEKKLSSERPSSDGEGVVENG). Basic and acidic residues predominate over residues 268 to 283 (HKAELEKKLSSERPSS). Serine 282 and serine 283 each carry phosphoserine. Residues 347–441 (DVPTCGYLNV…WIGILLAETG (95 aa)) form the PH 2 domain. Positions 451 to 456 (YDYIDV) match the SH2-binding 2 motif. The tract at residues 512–537 (KGKKPPVASNGVTGKGKTLSSQPKKA) is disordered. Phosphoserine is present on serine 548. Positions 557 to 648 (KNRVEADAKR…VKESLKKALA (92 aa)) form a coiled coil. Positions 594 to 637 (DLRAAIEVNAGRKPQAILEEKLKQLEEECRQKEAERVSLELELT) are interaction with F-actin. Serine 664, serine 665, and serine 668 each carry phosphoserine. Threonine 675 carries the post-translational modification Phosphothreonine. Serine 679 and serine 687 each carry phosphoserine.

In terms of assembly, monomer and homomultimer. Interacts via its C-terminus with F-actin; probably involving AFAP1 multimers. Interacts with activated SRC SH3-SH2 domains. Interacts via its PH 1 domain with PRKCA, PRKCB and PRKCI. In terms of processing, phosphorylated on tyrosine residues by SRC. As to expression, low expression in normal breast epithelial cell line MCF-10A and in tumorigenic breast cancer cell lines MCF-7, T-47D and ZR-75-1. Highly expressed in the invasive breast cancer cell lines MDA-MB-231 and MDA-MB-435. Overexpressed in prostate carcinoma.

Its subcellular location is the cytoplasm. The protein localises to the cytoskeleton. It localises to the stress fiber. Functionally, can cross-link actin filaments into both network and bundle structures. May modulate changes in actin filament integrity and induce lamellipodia formation. May function as an adapter molecule that links other proteins, such as SRC and PKC to the actin cytoskeleton. Seems to play a role in the development and progression of prostate adenocarcinoma by regulating cell-matrix adhesions and migration in the cancer cells. This Homo sapiens (Human) protein is Actin filament-associated protein 1 (AFAP1).